The chain runs to 415 residues: Gamma-glutamyl phosphate reductase (415 aa).

The protein belongs to the gamma-glutamyl phosphate reductase family.

The protein resides in the cytoplasm. It carries out the reaction L-glutamate 5-semialdehyde + phosphate + NADP(+) = L-glutamyl 5-phosphate + NADPH + H(+). It functions in the pathway amino-acid biosynthesis; L-proline biosynthesis; L-glutamate 5-semialdehyde from L-glutamate: step 2/2. Functionally, catalyzes the NADPH-dependent reduction of L-glutamate 5-phosphate into L-glutamate 5-semialdehyde and phosphate. The product spontaneously undergoes cyclization to form 1-pyrroline-5-carboxylate. In Carboxydothermus hydrogenoformans (strain ATCC BAA-161 / DSM 6008 / Z-2901), this protein is Gamma-glutamyl phosphate reductase.